An 88-amino-acid chain; its full sequence is ATP synthase F(0) complex subunit f, mitochondrial (88 aa).

Ala2 is subject to N-acetylalanine. The residue at position 3 (Ser3) is a Phosphoserine. Residue Lys16 is modified to N6-acetyllysine. The helical transmembrane segment at 62–79 threads the bilayer; sequence MVLAAYVVFSYCISYKEL.

This sequence belongs to the ATPase F chain family. In terms of assembly, component of the ATP synthase complex composed at least of ATP5F1A/subunit alpha, ATP5F1B/subunit beta, ATP5MC1/subunit c (homooctomer), MT-ATP6/subunit a, MT-ATP8/subunit 8, ATP5ME/subunit e, ATP5MF/subunit f, ATP5MG/subunit g, ATP5MK/subunit k, ATP5MJ/subunit j, ATP5F1C/subunit gamma, ATP5F1D/subunit delta, ATP5F1E/subunit epsilon, ATP5PF/subunit F6, ATP5PB/subunit b, ATP5PD/subunit d, ATP5PO/subunit OSCP. ATP synthase complex consists of a soluble F(1) head domain (subunits alpha(3) and beta(3)) - the catalytic core - and a membrane F(0) domain - the membrane proton channel (subunits c, a, 8, e, f, g, k and j). These two domains are linked by a central stalk (subunits gamma, delta, and epsilon) rotating inside the F1 region and a stationary peripheral stalk (subunits F6, b, d, and OSCP).

It localises to the mitochondrion. It is found in the mitochondrion inner membrane. Functionally, subunit f, of the mitochondrial membrane ATP synthase complex (F(1)F(0) ATP synthase or Complex V) that produces ATP from ADP in the presence of a proton gradient across the membrane which is generated by electron transport complexes of the respiratory chain. ATP synthase complex consist of a soluble F(1) head domain - the catalytic core - and a membrane F(1) domain - the membrane proton channel. These two domains are linked by a central stalk rotating inside the F(1) region and a stationary peripheral stalk. During catalysis, ATP synthesis in the catalytic domain of F(1) is coupled via a rotary mechanism of the central stalk subunits to proton translocation. In vivo, can only synthesize ATP although its ATP hydrolase activity can be activated artificially in vitro. Part of the complex F(0) domain. The chain is ATP synthase F(0) complex subunit f, mitochondrial from Mus musculus (Mouse).